The sequence spans 550 residues: Selinene synthase (550 aa).

Mg(2+) contacts are provided by aspartate 314, aspartate 318, aspartate 450, and glutamate 458. Residues 314–318 carry the DDXXD motif motif; the sequence is DDIYD.

The protein belongs to the terpene synthase family. Mg(2+) is required as a cofactor. Mn(2+) serves as cofactor.

It carries out the reaction (2E,6E)-farnesyl diphosphate = (+)-beta-selinene + diphosphate. The enzyme catalyses (2E,6E)-farnesyl diphosphate = alpha-selinene + diphosphate. Its pathway is secondary metabolite biosynthesis; terpenoid biosynthesis. Its function is as follows. Sesquiterpene synthase that catalyzes the formation of alpha- and beta-selinene from trans,trans-farnesyl diphosphate (FPP). Also produces some nerolidol. This is Selinene synthase (SES) from Ocimum basilicum (Sweet basil).